The chain runs to 150 residues: Suppressor of HU sensitivity involved in recombination protein 1 (150 aa).

Component of the SHU complex composed of at least CSM2, PSY3, SHU1 and SHU2.

It localises to the nucleus. In terms of biological role, plays a role in a RAD51/RAD54-dependent homologous recombination repair (HRR) pathway to repair MMS-induced lesions during S-phase. The chain is Suppressor of HU sensitivity involved in recombination protein 1 (SHU1) from Saccharomyces cerevisiae (strain ATCC 204508 / S288c) (Baker's yeast).